Here is a 156-residue protein sequence, read N- to C-terminus: Small ribosomal subunit protein uS7 (156 aa).

This sequence belongs to the universal ribosomal protein uS7 family. As to quaternary structure, part of the 30S ribosomal subunit. Contacts proteins S9 and S11.

In terms of biological role, one of the primary rRNA binding proteins, it binds directly to 16S rRNA where it nucleates assembly of the head domain of the 30S subunit. Is located at the subunit interface close to the decoding center, probably blocks exit of the E-site tRNA. This Alkaliphilus metalliredigens (strain QYMF) protein is Small ribosomal subunit protein uS7.